Reading from the N-terminus, the 1038-residue chain is MMAAEAGSEEGGPATAGTGGAAATGSSAYPAACRVKLPAAPPMAVAPCPGLADTDLAAALGGGAASGSGFLGTGPVSGVLGGAALTGGAAAGVAGAAAAGPAGDIALTKGTLSLPAETLGPGGGFPPLPPPPLLPPLGSGLGTVDEGDSLDGPEYEEEEVAIPLTAPPTNQWYHGKLDRTIAEERLRQAGKSGSYLIRESDRRPGSFVLSFLSQTNVVNHFRIIAMCGDYYIGGRRFSSLSDLIGYYSHVSCLLKGEKLLYPVAPPEPVEDRRRVRAILPYTKVPDTDEISFLKGDMFIVHNELEDGWMWVTNLRTDEQGLIVEDLVEEVGREEDPHEGKIWFHGKISKQEAYNLLMTVGQVCSFLVRPSDNTPGDYSLYFRTNENIQRFKICPTPNNQFMMGGRYYNSIGDIIDHYRKEQIVEGYYLKEPVPMQDQGQVLNDTVDGKEIYNTIRRKTKDAFYKNIVKKGYLLKKGKGKRWKNLYFILEGSDAQLIYFESEKRATKPKGLIDLSVCSVYVVHDSLFGRPNCFQIVVQHFSEEHYIFYFAGETPEQAEDWMKGLQAFCSLRKSSPGTSNKRLRQVSSLVLHIEEAHKLPVKHFTNPYCNIYLNSVQVAKTHAREGQNPVWSEEFVFDDLPPDINRFEITLSNKTKKSKDPDILFMRCQLSRLQKGHATDEWFLLSSHIPLKGIEPGSLRVRARYSMEKIMPEEEYSEFKELILQKELHVVYALSHVCGQDRTLLASILLKIFLHEKLESLLLCTLNDREISMEDEATTLFRATTLASTLMEQYMKATATQFVHHALKDSILKIMESKQSCELSPSKLEKNEDVNTNLAHLLSILSELVEKIFMASEILPPTLRYIYGCLQKSVQHKWPTNNTMRTRVVSGFVFLRLICPAILNPRMFNIISDSPSPIAARTLTLVAKSVQNLANLVEFGAKEPYMEGVNPFIKSNKHRMIMFLDELGNVPELPDTTEHSRTDLSRDLAALHEICVAHSDELRTLSNERGVQQHVLKKLLAITELLQQKQNQYTKTNDVR.

Met-1 is modified (N-acetylmethionine). A compositionally biased stretch (low complexity) spans 1-16 (MMAAEAGSEEGGPATA). 2 disordered regions span residues 1-24 (MMAAEAGSEEGGPATAGTGGAAAT) and 117-152 (ETLGPGGGFPPLPPPPLLPPLGSGLGTVDEGDSLDG). Over residues 124–135 (GFPPLPPPPLLP) the composition is skewed to pro residues. The region spanning 172–263 (WYHGKLDRTI…LKGEKLLYPV (92 aa)) is the SH2 1 domain. The region spanning 270–332 (EDRRRVRAIL…VEDLVEEVGR (63 aa)) is the SH3 domain. An SH2 2 domain is found at 342–432 (WFHGKISKQE…VEGYYLKEPV (91 aa)). The PH domain maps to 465 to 568 (NIVKKGYLLK…WMKGLQAFCS (104 aa)). The 114-residue stretch at 568-681 (SLRKSSPGTS…QKGHATDEWF (114 aa)) folds into the C2 domain. Tyr-606 bears the Phosphotyrosine mark. The region spanning 755–965 (KLESLLLCTL…HRMIMFLDEL (211 aa)) is the Ras-GAP domain. At Ser-822 the chain carries Phosphoserine.

Interacts with SQSTM1. Interacts with SPSB1; the interaction does not promote degradation. Interacts with CAV2 (tyrosine phosphorylated form). Directly interacts with NCK1. Interacts with PDGFRB (tyrosine phosphorylated). Interacts (via SH2 domain) with the 'Tyr-9' phosphorylated form of PDPK1. Interacts with tyrosine-phosphorylated EPHB4. Post-translationally, phosphorylated by SRC and LCK. The phosphorylation SRC inhibits its ability to stimulate the Ras-GTPase activity, whereas phosphorylation by LCK does not display any effect on stimulation activity.

It localises to the cytoplasm. Functionally, inhibitory regulator of the Ras-cyclic AMP pathway. Stimulates the GTPase of normal but not oncogenic Ras p21. This Rattus norvegicus (Rat) protein is Ras GTPase-activating protein 1 (Rasa1).